The primary structure comprises 489 residues: Ammonium transporter Rh type C (489 aa).

Over 1 to 21 (MGNCADCLRGFFCPPKNTNIR) the chain is Cytoplasmic. The helical transmembrane segment at 22 to 42 (ISLPAVCFVWQIAMIVLFGVF) threads the bilayer. Over 43–75 (IRYDAESDIRLWLQLKHTNNITSDIENDFYFRY) the chain is Extracellular. Asn-62 carries N-linked (GlcNAc...) asparagine glycosylation. Residues 76 to 96 (PSFQDVHVMIFVGFGFLMTFL) form a helical membrane-spanning segment. Residues 97 to 100 (KRYS) are Cytoplasmic-facing. The chain crosses the membrane as a helical span at residues 101-121 (FGGVGFNFLIGAFGLQWALLM). Residues 122 to 140 (QGWFHALDPTTGKISIGVE) are Extracellular-facing. Residues 141–161 (GLINADFCVAASLIAYGALLG) traverse the membrane as a helical segment. Residues 162 to 169 (KVSPVQLM) lie on the Cytoplasmic side of the membrane. A helical membrane pass occupies residues 170–190 (VVTLFGVTLFAVEEYIILNLL). Residues 191 to 195 (HCRDA) lie on the Extracellular side of the membrane. A helical membrane pass occupies residues 196–216 (GGSMVIHCFGGYYGLTISWIL). Residues 217–235 (YRPKLHQSKRLNGSVYHSD) lie on the Cytoplasmic side of the membrane. A helical transmembrane segment spans residues 236–256 (VFAMIGTLFLWMFWPSFNSAI). Residues 257–266 (TDHGSGQHRT) are Extracellular-facing. Residues 267 to 287 (AINTYIALASSVLTTVAISSA) form a helical membrane-spanning segment. Over 288 to 298 (SEKRGKLDMVH) the chain is Cytoplasmic. Residues 299–319 (IQNATLAGGVAMGTAAEFMIT) form a helical membrane-spanning segment. A topological domain (extracellular) is located at residue Pro-320. The helical transmembrane segment at 321–341 (YGALIVGFCTGIISTFGYLFV) threads the bilayer. Over 342 to 359 (SPFMEKYLKIQDTCGVHN) the chain is Cytoplasmic. A helical membrane pass occupies residues 360 to 380 (LHAMPGMLGGFIGAIVAAAAT). The Extracellular segment spans residues 381–412 (EEVYSREGLIETFDFEGKFADRTVGTQGGFQA). The helical transmembrane segment at 413–433 (AGVCVAIAFAVVGGAVVGLIL) threads the bilayer. At 434–489 (RLPIWGDPADDNCFDDEVYWEVPEDEEGILPVLEYNNHMTHKHQDISESNFSVEQS) the chain is on the cytoplasmic side.

It belongs to the ammonium transporter (TC 2.A.49) family. Rh subfamily. In terms of assembly, homotrimer.

Its subcellular location is the apical cell membrane. In terms of biological role, functions as an ammonia transporter. May play a role in the elimination of ammonia in the gill. The sequence is that of Ammonium transporter Rh type C (rhcg) from Gasterosteus aculeatus (Three-spined stickleback).